We begin with the raw amino-acid sequence, 275 residues long: Large ribosomal subunit protein uL2 (275 aa).

The interval 212–275 (NRHRGIRPQT…DKLIISRRKK (64 aa)) is disordered. Positions 257-275 (YKTRRKKPSDKLIISRRKK) are enriched in basic residues.

Belongs to the universal ribosomal protein uL2 family. In terms of assembly, part of the 50S ribosomal subunit. Forms a bridge to the 30S subunit in the 70S ribosome.

In terms of biological role, one of the primary rRNA binding proteins. Required for association of the 30S and 50S subunits to form the 70S ribosome, for tRNA binding and peptide bond formation. It has been suggested to have peptidyltransferase activity; this is somewhat controversial. Makes several contacts with the 16S rRNA in the 70S ribosome. The protein is Large ribosomal subunit protein uL2 of Nitratiruptor sp. (strain SB155-2).